The following is a 1023-amino-acid chain: Sodium/potassium-transporting ATPase subunit alpha-1 (1023 aa).

Positions methionine 1–alanine 5 are excised as a propeptide. The segment covering methionine 1–glutamate 11 has biased composition (basic and acidic residues). The segment at methionine 1 to glutamate 34 is disordered. Topologically, residues glycine 6 to proline 87 are cytoplasmic. At threonine 15 the chain carries Phosphothreonine; by PKC. A Phosphoserine; by PKC modification is found at serine 16. Residues proline 82–proline 84 are interaction with phosphoinositide-3 kinase. A helical transmembrane segment spans residues glutamate 88 to alanine 108. Over isoleucine 109 to tyrosine 131 the chain is Extracellular. The helical transmembrane segment at leucine 132–alanine 152 threads the bilayer. Over lysine 153 to isoleucine 288 the chain is Cytoplasmic. Positions asparagine 215–asparagine 235 are disordered. A helical membrane pass occupies residues glycine 289–isoleucine 308. Residues leucine 309–alanine 320 are Extracellular-facing. A helical transmembrane segment spans residues valine 321–alanine 338. The Cytoplasmic portion of the chain corresponds to threonine 339–leucine 772. Aspartate 376 serves as the catalytic 4-aspartylphosphate intermediate. Residue lysine 487 participates in ATP binding. Mg(2+) contacts are provided by aspartate 717 and aspartate 721. The helical transmembrane segment at lysine 773–isoleucine 792 threads the bilayer. At phenylalanine 793–leucine 802 the chain is on the extracellular side. The chain crosses the membrane as a helical span at residues glycine 803–alanine 823. Over tyrosine 824–lysine 843 the chain is Cytoplasmic. The helical transmembrane segment at leucine 844–phenylalanine 866 threads the bilayer. Over phenylalanine 867–cysteine 918 the chain is Extracellular. A helical transmembrane segment spans residues histidine 919–lysine 938. Residues threonine 939–asparagine 951 lie on the Cytoplasmic side of the membrane. Serine 943 is subject to Phosphoserine; by PKA. A helical membrane pass occupies residues lysine 952–tyrosine 970. Residues cysteine 971–proline 985 lie on the Extracellular side of the membrane. Residues threonine 986–lysine 1006 form a helical membrane-spanning segment. Topologically, residues leucine 1007 to tyrosine 1023 are cytoplasmic.

This sequence belongs to the cation transport ATPase (P-type) (TC 3.A.3) family. Type IIC subfamily. In terms of assembly, the sodium/potassium-transporting ATPase is composed of a catalytic alpha subunit, an auxiliary non-catalytic beta subunit and an additional regulatory subunit. Mainly expressed in kidney. Found in bladder, colon, eye, and testis. Found in low levels in brain, heart, spleen and liver.

It is found in the cell membrane. The protein resides in the sarcolemma. It catalyses the reaction K(+)(out) + Na(+)(in) + ATP + H2O = K(+)(in) + Na(+)(out) + ADP + phosphate + H(+). With respect to regulation, this alpha subunit is resistant to ouabain. This is the catalytic component of the active enzyme, which catalyzes the hydrolysis of ATP coupled with the exchange of sodium and potassium ions across the plasma membrane. This action creates the electrochemical gradient of sodium and potassium ions, providing the energy for active transport of various nutrients. This Rhinella marina (Cane toad) protein is Sodium/potassium-transporting ATPase subunit alpha-1 (ATP1A1).